A 695-amino-acid polypeptide reads, in one-letter code: Polyribonucleotide nucleotidyltransferase (695 aa).

Residues Asp488 and Asp494 each coordinate Mg(2+). In terms of domain architecture, KH spans 554–613 (PKTTIIKIKTDKIRDLIGRGGETIKGIISTSCASIDVDDSGNVNIFSNNQKSFDTAVQMV). In terms of domain architecture, S1 motif spans 623–690 (NKVYTGKVVK…DRGRIKLSRK (68 aa)).

It belongs to the polyribonucleotide nucleotidyltransferase family. In terms of assembly, component of the RNA degradosome, which is a multiprotein complex involved in RNA processing and mRNA degradation. Mg(2+) serves as cofactor.

The protein resides in the cytoplasm. It carries out the reaction RNA(n+1) + phosphate = RNA(n) + a ribonucleoside 5'-diphosphate. Involved in mRNA degradation. Catalyzes the phosphorolysis of single-stranded polyribonucleotides processively in the 3'- to 5'-direction. The sequence is that of Polyribonucleotide nucleotidyltransferase from Vesicomyosocius okutanii subsp. Calyptogena okutanii (strain HA).